A 340-amino-acid polypeptide reads, in one-letter code: Phenylalanine--tRNA ligase alpha subunit (340 aa).

Mg(2+) is bound at residue glutamate 254.

The protein belongs to the class-II aminoacyl-tRNA synthetase family. Phe-tRNA synthetase alpha subunit type 1 subfamily. In terms of assembly, tetramer of two alpha and two beta subunits. Mg(2+) serves as cofactor.

Its subcellular location is the cytoplasm. The catalysed reaction is tRNA(Phe) + L-phenylalanine + ATP = L-phenylalanyl-tRNA(Phe) + AMP + diphosphate + H(+). The sequence is that of Phenylalanine--tRNA ligase alpha subunit from Acidithiobacillus ferrooxidans (strain ATCC 23270 / DSM 14882 / CIP 104768 / NCIMB 8455) (Ferrobacillus ferrooxidans (strain ATCC 23270)).